The following is a 447-amino-acid chain: Exodeoxyribonuclease 7 large subunit (447 aa).

It belongs to the XseA family. As to quaternary structure, heterooligomer composed of large and small subunits.

The protein localises to the cytoplasm. The catalysed reaction is Exonucleolytic cleavage in either 5'- to 3'- or 3'- to 5'-direction to yield nucleoside 5'-phosphates.. Functionally, bidirectionally degrades single-stranded DNA into large acid-insoluble oligonucleotides, which are then degraded further into small acid-soluble oligonucleotides. The polypeptide is Exodeoxyribonuclease 7 large subunit (Thioalkalivibrio sulfidiphilus (strain HL-EbGR7)).